Here is a 383-residue protein sequence, read N- to C-terminus: Succinyl-diaminopimelate desuccinylase (383 aa).

H79 serves as a coordination point for Zn(2+). D81 is a catalytic residue. Position 110 (D110) interacts with Zn(2+). The Proton acceptor role is filled by E141. The Zn(2+) site is built by E142, E170, and H355.

This sequence belongs to the peptidase M20A family. DapE subfamily. As to quaternary structure, homodimer. It depends on Zn(2+) as a cofactor. Co(2+) serves as cofactor.

The catalysed reaction is N-succinyl-(2S,6S)-2,6-diaminopimelate + H2O = (2S,6S)-2,6-diaminopimelate + succinate. The protein operates within amino-acid biosynthesis; L-lysine biosynthesis via DAP pathway; LL-2,6-diaminopimelate from (S)-tetrahydrodipicolinate (succinylase route): step 3/3. In terms of biological role, catalyzes the hydrolysis of N-succinyl-L,L-diaminopimelic acid (SDAP), forming succinate and LL-2,6-diaminopimelate (DAP), an intermediate involved in the bacterial biosynthesis of lysine and meso-diaminopimelic acid, an essential component of bacterial cell walls. The polypeptide is Succinyl-diaminopimelate desuccinylase (Helicobacter pylori (strain P12)).